Here is a 558-residue protein sequence, read N- to C-terminus: uncharacterized protein (558 aa).

A DhaL domain is found at 7–206 (SNFIDMLRLG…FACFLEGMLS (200 aa)).

This is an uncharacterized protein from Mycoplasma pneumoniae (strain ATCC 29342 / M129 / Subtype 1) (Mycoplasmoides pneumoniae).